A 725-amino-acid polypeptide reads, in one-letter code: Exocyst complex component 8 (725 aa).

Ser-19 bears the Phosphoserine mark. The interval 137-159 (AGFFSTPGGASRDGSGPGEEGKQ) is disordered. Phosphothreonine is present on Thr-142. The PH domain maps to 182 to 282 (YLVYNGDLVE…WLEVLEDTKR (101 aa)). A disordered region spans residues 285 to 328 (SEKRRREQEEAAAPRGPPQVTSKATNPFEDDEEEEPAVPEVEEE). Positions 312-328 (FEDDEEEEPAVPEVEEE) are enriched in acidic residues.

This sequence belongs to the EXO84 family. In terms of assembly, the exocyst complex is composed of EXOC1, EXOC2, EXOC3, EXOC4, EXOC5, EXOC6, EXOC7 and EXOC8. Interacts (via PH domain) with GTP-bound RALA and RALB. Interacts with SH3BP1; required for the localization of both SH3BP1 and the exocyst to the leading edge of migrating cells.

The protein resides in the cytoplasm. It localises to the perinuclear region. The protein localises to the cell projection. It is found in the growth cone. Functionally, component of the exocyst complex involved in the docking of exocytic vesicles with fusion sites on the plasma membrane. The sequence is that of Exocyst complex component 8 (EXOC8) from Homo sapiens (Human).